Reading from the N-terminus, the 404-residue chain is ATP phosphoribosyltransferase regulatory subunit (404 aa).

Belongs to the class-II aminoacyl-tRNA synthetase family. HisZ subfamily. As to quaternary structure, heteromultimer composed of HisG and HisZ subunits.

The protein localises to the cytoplasm. Its pathway is amino-acid biosynthesis; L-histidine biosynthesis; L-histidine from 5-phospho-alpha-D-ribose 1-diphosphate: step 1/9. Required for the first step of histidine biosynthesis. May allow the feedback regulation of ATP phosphoribosyltransferase activity by histidine. The polypeptide is ATP phosphoribosyltransferase regulatory subunit (Picosynechococcus sp. (strain ATCC 27264 / PCC 7002 / PR-6) (Agmenellum quadruplicatum)).